Reading from the N-terminus, the 922-residue chain is Two-component sensor PprA (922 aa).

A compositionally biased stretch (low complexity) spans 1-10 (MFEFSRSSSA). Residues 1–22 (MFEFSRSSSAEAERPEPFSQEG) form a disordered region. Residues 506–558 (VKTRYRLADGQGNWHWLYDEAKLLRDAQGLPSEAVGLWLDVTEQHLAAQRIAE) enclose the PAC 1 domain. The PAS domain occupies 559–622 (SEERYRVLVE…EDASALRARL (64 aa)). The 53-residue stretch at 632–684 (EVPELRFNLPGQRFLWLVWAERPLFDARGELCEVQAVGRDNTPVRRAQQQLAQ) folds into the PAC 2 domain. The 220-residue stretch at 697 to 916 (GLAHEVKQPL…LFVVRLPLAA (220 aa)) folds into the Histidine kinase domain. His700 carries the phosphohistidine; by autocatalysis modification.

In terms of processing, autophosphorylated.

It carries out the reaction ATP + protein L-histidine = ADP + protein N-phospho-L-histidine.. In terms of biological role, member of the two-component regulatory system PprA/PprB involved in biofilm formation by controlling the expression of many related genes including type IVb pili major subunit flp pilin, adhesin bapA or cupE fimbriae. Functions as a heme sensor histidine kinase which is autophosphorylated at a histidine residue and transfers its phosphate group to PprB. The protein is Two-component sensor PprA of Pseudomonas aeruginosa (strain ATCC 15692 / DSM 22644 / CIP 104116 / JCM 14847 / LMG 12228 / 1C / PRS 101 / PAO1).